A 428-amino-acid polypeptide reads, in one-letter code: Probable mannosyltransferase YUR1 (428 aa).

The Cytoplasmic segment spans residues 1–3; that stretch reads MAK. Residues 4 to 24 traverse the membrane as a helical; Signal-anchor for type II membrane protein segment; that stretch reads GGSLYIVGIFLPIWTFMIYIF. Residues 25-88 form a stem region region; it reads GKELFLIRKY…TRQNDSDSFH (64 aa). The Lumenal portion of the chain corresponds to 25 to 428; the sequence is GKELFLIRKY…YFLKEEQDEI (404 aa). N-linked (GlcNAc...) asparagine glycans are attached at residues Asn-77, Asn-82, Asn-92, and Asn-167. A catalytic region spans residues 89–428; sequence LRENATILML…YFLKEEQDEI (340 aa). Catalysis depends on Glu-313, which acts as the Nucleophile. Asn-414 carries N-linked (GlcNAc...) asparagine glycosylation.

The protein belongs to the glycosyltransferase 15 family.

The protein resides in the golgi apparatus membrane. It functions in the pathway protein modification; protein glycosylation. Its function is as follows. Possible glycosyltransferase involved in N-linked glycosylation. Transfers an alpha-D-mannosyl residue from GDP-mannose into lipid-linked oligosaccharide, forming an alpha-(1-&gt;2)-D-mannosyl-D-mannose linkage. The protein is Probable mannosyltransferase YUR1 (YUR1) of Saccharomyces cerevisiae (strain ATCC 204508 / S288c) (Baker's yeast).